Consider the following 250-residue polypeptide: uncharacterized protein (250 aa).

A signal peptide spans 1 to 19; sequence MAKPRNAAESKAAKAQANA. A run of 2 helical transmembrane segments spans residues 51–71 and 73–93; these read IGAF…AGGF and MFTM…VIFG. Residues 226 to 250 form a disordered region; it reads AGVMPKGPLPTTAKMRSVQRTVRRK.

It localises to the cell membrane. This is an uncharacterized protein from Mycobacterium tuberculosis (strain CDC 1551 / Oshkosh).